The primary structure comprises 427 residues: Trigger factor (427 aa).

The PPIase FKBP-type domain maps to 163-248; the sequence is GDTVVIDFVG…VHEVKAKEVP (86 aa).

This sequence belongs to the FKBP-type PPIase family. Tig subfamily.

Its subcellular location is the cytoplasm. It catalyses the reaction [protein]-peptidylproline (omega=180) = [protein]-peptidylproline (omega=0). Involved in protein export. Acts as a chaperone by maintaining the newly synthesized protein in an open conformation. Functions as a peptidyl-prolyl cis-trans isomerase. This chain is Trigger factor, found in Streptococcus equi subsp. zooepidemicus (strain MGCS10565).